Reading from the N-terminus, the 190-residue chain is ATP synthase subunit delta (190 aa).

The protein belongs to the ATPase delta chain family. In terms of assembly, F-type ATPases have 2 components, F(1) - the catalytic core - and F(0) - the membrane proton channel. F(1) has five subunits: alpha(3), beta(3), gamma(1), delta(1), epsilon(1). F(0) has three main subunits: a(1), b(2) and c(10-14). The alpha and beta chains form an alternating ring which encloses part of the gamma chain. F(1) is attached to F(0) by a central stalk formed by the gamma and epsilon chains, while a peripheral stalk is formed by the delta and b chains.

The protein resides in the cell inner membrane. In terms of biological role, f(1)F(0) ATP synthase produces ATP from ADP in the presence of a proton or sodium gradient. F-type ATPases consist of two structural domains, F(1) containing the extramembraneous catalytic core and F(0) containing the membrane proton channel, linked together by a central stalk and a peripheral stalk. During catalysis, ATP synthesis in the catalytic domain of F(1) is coupled via a rotary mechanism of the central stalk subunits to proton translocation. Its function is as follows. This protein is part of the stalk that links CF(0) to CF(1). It either transmits conformational changes from CF(0) to CF(1) or is implicated in proton conduction. This Salinibacter ruber (strain DSM 13855 / M31) protein is ATP synthase subunit delta.